The chain runs to 177 residues: ATP synthase subunit delta (177 aa).

It belongs to the ATPase delta chain family. F-type ATPases have 2 components, F(1) - the catalytic core - and F(0) - the membrane proton channel. F(1) has five subunits: alpha(3), beta(3), gamma(1), delta(1), epsilon(1). F(0) has three main subunits: a(1), b(2) and c(10-14). The alpha and beta chains form an alternating ring which encloses part of the gamma chain. F(1) is attached to F(0) by a central stalk formed by the gamma and epsilon chains, while a peripheral stalk is formed by the delta and b chains.

It is found in the cell inner membrane. F(1)F(0) ATP synthase produces ATP from ADP in the presence of a proton or sodium gradient. F-type ATPases consist of two structural domains, F(1) containing the extramembraneous catalytic core and F(0) containing the membrane proton channel, linked together by a central stalk and a peripheral stalk. During catalysis, ATP synthesis in the catalytic domain of F(1) is coupled via a rotary mechanism of the central stalk subunits to proton translocation. Its function is as follows. This protein is part of the stalk that links CF(0) to CF(1). It either transmits conformational changes from CF(0) to CF(1) or is implicated in proton conduction. This Vibrio cholerae serotype O1 (strain ATCC 39541 / Classical Ogawa 395 / O395) protein is ATP synthase subunit delta.